Here is a 542-residue protein sequence, read N- to C-terminus: Phenylalanine--tRNA ligase beta subunit (542 aa).

In terms of domain architecture, B5 spans 269–344 (LRRYTVSVSA…MTIGYDKLSP (76 aa)). Mg(2+) contacts are provided by Asp322, Asp328, Glu331, and Glu332.

Belongs to the phenylalanyl-tRNA synthetase beta subunit family. Type 2 subfamily. In terms of assembly, tetramer of two alpha and two beta subunits. It depends on Mg(2+) as a cofactor.

The protein localises to the cytoplasm. It carries out the reaction tRNA(Phe) + L-phenylalanine + ATP = L-phenylalanyl-tRNA(Phe) + AMP + diphosphate + H(+). The sequence is that of Phenylalanine--tRNA ligase beta subunit from Sulfolobus acidocaldarius (strain ATCC 33909 / DSM 639 / JCM 8929 / NBRC 15157 / NCIMB 11770).